Here is a 721-residue protein sequence, read N- to C-terminus: WD repeat and coiled-coil-containing protein (721 aa).

The residue at position 1 (Met-1) is an N-acetylmethionine. WD repeat units follow at residues 55–98 and 154–194; these read GQFE…MESS and NTQG…LHRC. Phosphoserine occurs at positions 299, 468, 501, and 523. A compositionally biased stretch (polar residues) spans 520–537; the sequence is QPASLPRHSSTPDHTSTL. A disordered region spans residues 520 to 553; it reads QPASLPRHSSTPDHTSTLEPPRLPQRKNLQSEKE. The residue at position 530 (Thr-530) is a Phosphothreonine. An interaction with HCK region spans residues 539–545; that stretch reads PPRLPQR. Residues 556 to 584 are a coiled coil; the sequence is QLSKEVEILSRNLVEMQRCLSELTNRLHN. 2 positions are modified to phosphoserine: Ser-686 and Ser-690.

Oligomer. Interacts with HCK (via SH3 domain). In terms of processing, phosphorylated on Tyr when associated with HCK.

The sequence is that of WD repeat and coiled-coil-containing protein from Homo sapiens (Human).